We begin with the raw amino-acid sequence, 692 residues long: Protein artemis (692 aa).

Phosphothreonine is present on Thr380. A Phosphoserine modification is found at Ser385. 2 disordered regions span residues 504–555 and 640–664; these read LENF…DSQS and STNA…LPKR. The span at 506–520 shows a compositional bias: polar residues; it reads NFPSSTVAGGSQSPK. A compositionally biased stretch (low complexity) spans 530-543; the sequence is THISSQNSSQSTHI. Polar residues-rich tracts occupy residues 544–555 and 640–650; these read TEQGSQGWDSQS and STNADSQSSSD. At Ser645 the chain carries Phosphoserine; by ATM.

The protein belongs to the DNA repair metallo-beta-lactamase (DRMBL) family. In terms of assembly, interacts with LIG4; the interaction is direct. Interacts with ATM. Interacts with BRCA1. Interacts with PRKDC. Interacts with TP53BP1. Also exhibits ATM- and phosphorylation-dependent interaction with the MRN complex, composed of MRE11, RAD50, and NBN. Phosphorylation on undefined residues by PRKDC may stimulate endonucleolytic activity on 5' and 3' hairpins and overhangs. PRKDC must remain present, even after phosphorylation, for efficient hairpin opening. Also phosphorylated by ATM in response to ionizing radiation (IR) and by ATR in response to ultraviolet (UV) radiation. As to expression, ubiquitously expressed, with highest levels in the kidney, lung, pancreas and placenta (at the mRNA level). Expression is not increased in thymus or bone marrow, sites of V(D)J recombination.

It is found in the nucleus. Its function is as follows. Nuclease involved in DNA non-homologous end joining (NHEJ); required for double-strand break repair and V(D)J recombination. Required for V(D)J recombination, the process by which exons encoding the antigen-binding domains of immunoglobulins and T-cell receptor proteins are assembled from individual V, (D), and J gene segments. V(D)J recombination is initiated by the lymphoid specific RAG endonuclease complex, which generates site specific DNA double strand breaks (DSBs). These DSBs present two types of DNA end structures: hairpin sealed coding ends and phosphorylated blunt signal ends. These ends are independently repaired by the non homologous end joining (NHEJ) pathway to form coding and signal joints respectively. This protein exhibits single-strand specific 5'-3' exonuclease activity in isolation and acquires endonucleolytic activity on 5' and 3' hairpins and overhangs when in a complex with PRKDC. The latter activity is required specifically for the resolution of closed hairpins prior to the formation of the coding joint. Also required for the repair of complex DSBs induced by ionizing radiation, which require substantial end-processing prior to religation by NHEJ. In Homo sapiens (Human), this protein is Protein artemis.